A 386-amino-acid polypeptide reads, in one-letter code: Glutamate 5-kinase (386 aa).

Lys-28 lines the ATP pocket. Substrate is bound by residues Ser-68, Asp-155, and Asn-167. ATP is bound at residue Thr-187–Asp-188. In terms of domain architecture, PUA spans Arg-294 to Ile-372.

It belongs to the glutamate 5-kinase family.

It localises to the cytoplasm. The catalysed reaction is L-glutamate + ATP = L-glutamyl 5-phosphate + ADP. It participates in amino-acid biosynthesis; L-proline biosynthesis; L-glutamate 5-semialdehyde from L-glutamate: step 1/2. In terms of biological role, catalyzes the transfer of a phosphate group to glutamate to form L-glutamate 5-phosphate. This Hahella chejuensis (strain KCTC 2396) protein is Glutamate 5-kinase.